The following is a 290-amino-acid chain: Inner membrane protein YebZ (290 aa).

The Periplasmic segment spans residues 1 to 10 (MLAFTWIALR). Residues 11-31 (FIHFTSLMLVFGFAMYGAWLA) form a helical membrane-spanning segment. Residues 32 to 49 (PLTIRRLLAKRFLRLQQH) lie on the Cytoplasmic side of the membrane. Residues 50 to 70 (AAVWSLISATAMLAVQGGLMG) traverse the membrane as a helical segment. The Periplasmic portion of the chain corresponds to 71-89 (TGWTDVFSPNIWQAVLQTQ). Residues 90–110 (FGGIWLWQIVLALVTLIVALM) traverse the membrane as a helical segment. The Cytoplasmic segment spans residues 111-117 (QPRNMPR). The helical transmembrane segment at 118-138 (LLFMLTTAQFILLAGVGHATL) threads the bilayer. Topologically, residues 139-151 (NEGVTAKIHQTNH) are periplasmic. A helical membrane pass occupies residues 152–172 (AIHLICAAAWFGGLLPVLWCM). At 173–195 (QLIKGRWRHQAIQALMRFSWCGH) the chain is on the cytoplasmic side. A helical transmembrane segment spans residues 196–216 (FAVIGVLASGVLNALLITGFP). Residues 217–222 (PTLTTY) lie on the Periplasmic side of the membrane. The helical transmembrane segment at 223–243 (WGQLLLLKAILVMIMVVIALA) threads the bilayer. At 244-260 (NRYVLVPRMRQDEDRAA) the chain is on the cytoplasmic side. Residues 261-281 (PWFVWMTKLEWAIGAVVLVII) form a helical membrane-spanning segment. The Periplasmic portion of the chain corresponds to 282–290 (SLLATLEPF).

It belongs to the CopD family.

Its subcellular location is the cell inner membrane. In Escherichia coli (strain K12), this protein is Inner membrane protein YebZ (yebZ).